The primary structure comprises 382 residues: MPQRQPQNAHPADGIYFGLMSGTSMDGVDGVAVRFEAGKAPVVLAEAFVGFAQSLRDALFALQQPGDDEIDRESLAANALVTRYAVCCHELQRTAGLSRDEIRAIGVHGQTVRHRPERGYTRQINNPALLAELTQVDVIADFRSRDVAAGGHGAPLAPAFHATVFGAPGETRVVCNLGGISNITILPGEGGDVRGFDCGPANALLDEWATRHLGKPYDDGGKFAARGTVHAPLLDALLDEPYFAAPPPKSTGRDLFNPAWLDAKLAAFAQVAPEDVQATLTALTAVSVAREIAQHAAGCKAVFVCGGGARNPVLLDALRHALREAGVPATVDTTATLGVPPQQVEALAFAWLAYRFTARQPGNLATVTGAAGNRVLGALYPR.

22–29 (GTSMDGVD) contributes to the ATP binding site.

It belongs to the anhydro-N-acetylmuramic acid kinase family.

It carries out the reaction 1,6-anhydro-N-acetyl-beta-muramate + ATP + H2O = N-acetyl-D-muramate 6-phosphate + ADP + H(+). The protein operates within amino-sugar metabolism; 1,6-anhydro-N-acetylmuramate degradation. It participates in cell wall biogenesis; peptidoglycan recycling. In terms of biological role, catalyzes the specific phosphorylation of 1,6-anhydro-N-acetylmuramic acid (anhMurNAc) with the simultaneous cleavage of the 1,6-anhydro ring, generating MurNAc-6-P. Is required for the utilization of anhMurNAc either imported from the medium or derived from its own cell wall murein, and thus plays a role in cell wall recycling. The polypeptide is Anhydro-N-acetylmuramic acid kinase (Burkholderia lata (strain ATCC 17760 / DSM 23089 / LMG 22485 / NCIMB 9086 / R18194 / 383)).